Here is a 95-residue protein sequence, read N- to C-terminus: Small ribosomal subunit protein uS19 (95 aa).

Belongs to the universal ribosomal protein uS19 family.

Protein S19 forms a complex with S13 that binds strongly to the 16S ribosomal RNA. The protein is Small ribosomal subunit protein uS19 of Chloroflexus aurantiacus (strain ATCC 29366 / DSM 635 / J-10-fl).